A 191-amino-acid polypeptide reads, in one-letter code: Cell division protein SepF (191 aa).

Residues 151-164 (SSSPEEASPSSVST) are compositionally biased toward low complexity. The interval 151 to 191 (SSSPEEASPSSVSTEKTPQYSLGKNTTPEPAWGNSKLSAYS) is disordered. Residues 165–178 (EKTPQYSLGKNTTP) show a composition bias toward polar residues.

This sequence belongs to the SepF family. As to quaternary structure, homodimer. Interacts with FtsZ.

The protein localises to the cytoplasm. Its function is as follows. Cell division protein that is part of the divisome complex and is recruited early to the Z-ring. Probably stimulates Z-ring formation, perhaps through the cross-linking of FtsZ protofilaments. Its function overlaps with FtsA. In Prochlorococcus marinus (strain MIT 9301), this protein is Cell division protein SepF.